The chain runs to 363 residues: Dihydroorotate dehydrogenase (quinone) (363 aa).

FMN is bound by residues 62–66 (AGYDK) and threonine 86. Lysine 66 is a binding site for substrate. 111-115 (NRLGF) provides a ligand contact to substrate. FMN-binding residues include asparagine 140 and asparagine 171. Residue asparagine 171 coordinates substrate. Serine 174 functions as the Nucleophile in the catalytic mechanism. A substrate-binding site is contributed by asparagine 176. FMN contacts are provided by lysine 216 and serine 244. 245-246 (NT) serves as a coordination point for substrate. FMN-binding positions include glycine 266, glycine 295, and 316–317 (YT).

This sequence belongs to the dihydroorotate dehydrogenase family. Type 2 subfamily. In terms of assembly, monomer. Requires FMN as cofactor.

The protein resides in the cell membrane. The enzyme catalyses (S)-dihydroorotate + a quinone = orotate + a quinol. It functions in the pathway pyrimidine metabolism; UMP biosynthesis via de novo pathway; orotate from (S)-dihydroorotate (quinone route): step 1/1. Catalyzes the conversion of dihydroorotate to orotate with quinone as electron acceptor. The protein is Dihydroorotate dehydrogenase (quinone) of Chelativorans sp. (strain BNC1).